The sequence spans 436 residues: tRNA-2-methylthio-N(6)-dimethylallyladenosine synthase (436 aa).

One can recognise an MTTase N-terminal domain in the interval 5-121 (RKLFIKTYGC…LPDMLERTEG (117 aa)). Positions 14, 50, 84, 158, 162, and 165 each coordinate [4Fe-4S] cluster. A Radical SAM core domain is found at 144–374 (ATRGPAAFLT…TEQQRAAQMA (231 aa)). In terms of domain architecture, TRAM spans 373-435 (MAMVGREVGV…PNSLAGERLG (63 aa)).

The protein belongs to the methylthiotransferase family. MiaB subfamily. Monomer. It depends on [4Fe-4S] cluster as a cofactor.

The protein localises to the cytoplasm. The enzyme catalyses N(6)-dimethylallyladenosine(37) in tRNA + (sulfur carrier)-SH + AH2 + 2 S-adenosyl-L-methionine = 2-methylsulfanyl-N(6)-dimethylallyladenosine(37) in tRNA + (sulfur carrier)-H + 5'-deoxyadenosine + L-methionine + A + S-adenosyl-L-homocysteine + 2 H(+). Functionally, catalyzes the methylthiolation of N6-(dimethylallyl)adenosine (i(6)A), leading to the formation of 2-methylthio-N6-(dimethylallyl)adenosine (ms(2)i(6)A) at position 37 in tRNAs that read codons beginning with uridine. This chain is tRNA-2-methylthio-N(6)-dimethylallyladenosine synthase, found in Cereibacter sphaeroides (strain ATCC 17023 / DSM 158 / JCM 6121 / CCUG 31486 / LMG 2827 / NBRC 12203 / NCIMB 8253 / ATH 2.4.1.) (Rhodobacter sphaeroides).